We begin with the raw amino-acid sequence, 188 residues long: Elongation factor P (188 aa).

Lys-34 is modified (N6-(3,6-diaminohexanoyl)-5-hydroxylysine).

This sequence belongs to the elongation factor P family. May be beta-lysylated on the epsilon-amino group of Lys-34 by the combined action of EpmA and EpmB, and then hydroxylated on the C5 position of the same residue by EpmC (if this protein is present). Lysylation is critical for the stimulatory effect of EF-P on peptide-bond formation. The lysylation moiety may extend toward the peptidyltransferase center and stabilize the terminal 3-CCA end of the tRNA. Hydroxylation of the C5 position on Lys-34 may allow additional potential stabilizing hydrogen-bond interactions with the P-tRNA.

It is found in the cytoplasm. It functions in the pathway protein biosynthesis; polypeptide chain elongation. Involved in peptide bond synthesis. Alleviates ribosome stalling that occurs when 3 or more consecutive Pro residues or the sequence PPG is present in a protein, possibly by augmenting the peptidyl transferase activity of the ribosome. Modification of Lys-34 is required for alleviation. The protein is Elongation factor P of Xanthomonas axonopodis pv. citri (strain 306).